The following is a 284-amino-acid chain: ATP phosphoribosyltransferase (284 aa).

The protein belongs to the ATP phosphoribosyltransferase family. Long subfamily. Mg(2+) serves as cofactor.

The protein localises to the cytoplasm. The catalysed reaction is 1-(5-phospho-beta-D-ribosyl)-ATP + diphosphate = 5-phospho-alpha-D-ribose 1-diphosphate + ATP. It participates in amino-acid biosynthesis; L-histidine biosynthesis; L-histidine from 5-phospho-alpha-D-ribose 1-diphosphate: step 1/9. Its activity is regulated as follows. Feedback inhibited by histidine. Catalyzes the condensation of ATP and 5-phosphoribose 1-diphosphate to form N'-(5'-phosphoribosyl)-ATP (PR-ATP). Has a crucial role in the pathway because the rate of histidine biosynthesis seems to be controlled primarily by regulation of HisG enzymatic activity. The chain is ATP phosphoribosyltransferase from Methanococcoides burtonii (strain DSM 6242 / NBRC 107633 / OCM 468 / ACE-M).